Consider the following 355-residue polypeptide: Anthranilate phosphoribosyltransferase (355 aa).

5-phospho-alpha-D-ribose 1-diphosphate-binding positions include G91, G94–D95, T99, N101–T104, K119–S127, and A131. Residue G91 participates in anthranilate binding. Mg(2+) is bound at residue S103. Position 122 (N122) interacts with anthranilate. An anthranilate-binding site is contributed by R177. Mg(2+) is bound by residues D234 and E235.

This sequence belongs to the anthranilate phosphoribosyltransferase family. Homodimer. Mg(2+) serves as cofactor.

It catalyses the reaction N-(5-phospho-beta-D-ribosyl)anthranilate + diphosphate = 5-phospho-alpha-D-ribose 1-diphosphate + anthranilate. Its pathway is amino-acid biosynthesis; L-tryptophan biosynthesis; L-tryptophan from chorismate: step 2/5. Functionally, participates in the tryptophan-dependent indole-3-acetic acid production, which is a phytohormone released by A.brasilense. Its function is as follows. Catalyzes the transfer of the phosphoribosyl group of 5-phosphorylribose-1-pyrophosphate (PRPP) to anthranilate to yield N-(5'-phosphoribosyl)-anthranilate (PRA). The sequence is that of Anthranilate phosphoribosyltransferase from Azospirillum brasilense.